Reading from the N-terminus, the 371-residue chain is Aminomethyltransferase (371 aa).

This sequence belongs to the GcvT family. As to quaternary structure, the glycine cleavage system is composed of four proteins: P, T, L and H.

The enzyme catalyses N(6)-[(R)-S(8)-aminomethyldihydrolipoyl]-L-lysyl-[protein] + (6S)-5,6,7,8-tetrahydrofolate = N(6)-[(R)-dihydrolipoyl]-L-lysyl-[protein] + (6R)-5,10-methylene-5,6,7,8-tetrahydrofolate + NH4(+). Its function is as follows. The glycine cleavage system catalyzes the degradation of glycine. The sequence is that of Aminomethyltransferase from Oceanobacillus iheyensis (strain DSM 14371 / CIP 107618 / JCM 11309 / KCTC 3954 / HTE831).